The primary structure comprises 246 residues: MKYDIIGDIHGCFQEFQDLTTKLGYSWDSGIPIHNAKRRLAFVGDITDRGPHSLRMIEIVWELVINRKDAYYAPGNHCNKLYRFFLGRNVTIAHGLETTVAEYEALPSNKQQIIKEKFITLYEQSPLYHILDEKNLTVCHAGIRQDYIGRQDKKVQTFVLYGDITGEKHPDGSPVRQDWAKEYKGETWIVYGHTPVNEPRFVNHTVNIDTGAVFGGKLTGLRYPELETVSVPSSLPFVPEKFRPIS.

This sequence belongs to the PrpE family. Requires Ni(2+) as cofactor.

It catalyses the reaction P(1),P(4)-bis(5'-guanosyl) tetraphosphate + H2O = GMP + GTP + 2 H(+). Functionally, asymmetrically hydrolyzes Ap4p to yield AMP and ATP. In Bacillus mycoides (strain KBAB4) (Bacillus weihenstephanensis), this protein is Bis(5'-nucleosyl)-tetraphosphatase PrpE [asymmetrical].